A 236-amino-acid polypeptide reads, in one-letter code: Sugar fermentation stimulation protein homolog (236 aa).

This sequence belongs to the SfsA family.

This Proteus mirabilis (strain HI4320) protein is Sugar fermentation stimulation protein homolog.